A 97-amino-acid chain; its full sequence is Protein YukE (97 aa).

Positions 21 to 94 (VESQEVLNQV…ESTDQDIANQ (74 aa)) form a coiled coil.

It belongs to the WXG100 family. sagEsxA-like subfamily. In terms of assembly, homodimer.

It is found in the secreted. Functionally, required to deliver LXG toxins to target cells. The protein is Protein YukE (yukE) of Bacillus subtilis (strain 168).